An 878-amino-acid chain; its full sequence is MKKLIYYFGSNGSDGNASMKNILGNKGAGLAEMSNLKLPIPDGFTITTELCNYFYTHNNNFPKNFQSDLKKAITELEIITGKIFGSTSNPLLLSVRSGSKVSMPGMMDTILNLGMNNEVCNALADSCGDKRFALDSYKRFLEMYGSTVLSIPSDLFEQICEKHKMQADIHKDSDITVELLEKIIDDFKRLHIKYTKQLINDPYEQLESAIKAVLHSWMSNRAVIYRKINNISEDCGTAINIQAMVFGNLGKTSATGVAFTRSPSTGEKKLFGEFLINAQGEDIVSGTRTPMPIIANDSNSMQAMMPEVFKELSQIAQKLEEHYLDMQDIEFTIENNKLYILQTRTAKRTAIAAINIAVQMVEEKLISKEQALMRIDPESLNQLLHTRIDYSKGLTSIAEGLPASPGAATGIAVFSPYDAEKLSHHHKVILVRHDTSPEDINGMHVSSGIVTIRGGMTSHAAVVARGMGKPCVCGTSNLSIDEKKQILTAGDIVIKQGDIITIDGGSGKIFLGEMPLIQPTFSEESKLILDWADEISSLKVRANAETVNDALVSVKFGAQGIGLCRSEHMFFDKNKIPLVRDMIIAPDIERRKLAVQKLLPLQTEDFKALFRVMKDKPVNIRLLDPPLHEFLPTTEEDKKNLANSLNLPLSMINQRLHAMHEVNPMLGHRGCRLGICSPEIYQMQIEAIFTAIFELHKKEHIECNLELMIPLISNVGEIQKLKMDIYAVIEKLEQRYRYKFSFTLGTMIELPRAALGSKKIAKEVDYFSFGTNDLTQTTYGISRDDIASFLPYYLEEKIFESDPFTTLDEEGVGELIDIAIKRGKSSNANLKLGACGEHAGNPASIEFFHRMNLNYVSCSPYRIPIARIAAAQAKIKHG.

Residues 1-347 are N-terminal; sequence MKKLIYYFGS…LYILQTRTAK (347 aa). Arg96 contacts ATP. Residues 348–404 are linker 1; the sequence is RTAIAAINIAVQMVEEKLISKEQALMRIDPESLNQLLHTRIDYSKGLTSIAEGLPAS. Residues 405-502 form a central region; the sequence is PGAATGIAVF…VIKQGDIITI (98 aa). Thr457 bears the Phosphothreonine; by PDRP1 mark. His459 (tele-phosphohistidine intermediate) is an active-site residue. A linker 2 region spans residues 503–537; the sequence is DGGSGKIFLGEMPLIQPTFSEESKLILDWADEISS. The interval 538 to 878 is C-terminal; the sequence is LKVRANAETV…AAAQAKIKHG (341 aa). 7 residues coordinate substrate: Arg565, Arg621, Glu749, Gly770, Thr771, Asn772, and Asp773. Position 749 (Glu749) interacts with Mg(2+). Asp773 lines the Mg(2+) pocket. Residue Cys835 is the Proton donor of the active site.

This sequence belongs to the PEP-utilizing enzyme family. Homodimer. Mg(2+) is required as a cofactor. Phosphorylation of Thr-457 in the dark inactivates the enzyme. Dephosphorylation upon light stimulation reactivates the enzyme.

It catalyses the reaction pyruvate + phosphate + ATP = phosphoenolpyruvate + AMP + diphosphate + H(+). Its activity is regulated as follows. Activated by light-induced dephosphorylation. Inhibited by dark-induced phosphorylation. Both reactions are catalyzed by PDRP1. Functionally, catalyzes the reversible phosphorylation of pyruvate and phosphate. The sequence is that of Pyruvate, phosphate dikinase (ppdK) from Rickettsia conorii (strain ATCC VR-613 / Malish 7).